Reading from the N-terminus, the 453-residue chain is Bestrophin homolog 5 (453 aa).

The next 4 membrane-spanning stretches (helical) occupy residues 78 to 98, 113 to 133, 275 to 295, and 314 to 334; these read ELIVWICAYSLVSVIYRFALT, DARMGYLPLNFVLGFFCNIII, IPLMYPQLVNMAVHTYFFLCI, and LYIPFMTIIEFIFYMGWLKVA.

The protein belongs to the anion channel-forming bestrophin (TC 1.A.46) family. Calcium-sensitive chloride channel subfamily. Forms oligomers.

Its subcellular location is the cell membrane. Functionally, forms chloride channels. In Caenorhabditis elegans, this protein is Bestrophin homolog 5 (best-5).